The sequence spans 353 residues: GTPase Obg (353 aa).

The 159-residue stretch at 1 to 159 (MKFVDEVRIH…RDLVLELKLL (159 aa)) folds into the Obg domain. An OBG-type G domain is found at 160-333 (ADVGIVGYPN…LMDAVGRALY (174 aa)). GTP contacts are provided by residues 166 to 173 (GYPNAGKS), 191 to 195 (FTTLV), 212 to 215 (DIPG), 283 to 286 (TKID), and 314 to 316 (SAV). Mg(2+)-binding residues include Ser173 and Thr193.

This sequence belongs to the TRAFAC class OBG-HflX-like GTPase superfamily. OBG GTPase family. In terms of assembly, monomer. Mg(2+) is required as a cofactor.

The protein resides in the cytoplasm. In terms of biological role, an essential GTPase which binds GTP, GDP and possibly (p)ppGpp with moderate affinity, with high nucleotide exchange rates and a fairly low GTP hydrolysis rate. Plays a role in control of the cell cycle, stress response, ribosome biogenesis and in those bacteria that undergo differentiation, in morphogenesis control. The chain is GTPase Obg from Anaeromyxobacter sp. (strain Fw109-5).